Reading from the N-terminus, the 184-residue chain is ATP synthase subunit b, chloroplastic (184 aa).

A helical membrane pass occupies residues 27 to 49; the sequence is LATNLINLSVVLGVLIFFGKGVL.

The protein belongs to the ATPase B chain family. In terms of assembly, F-type ATPases have 2 components, F(1) - the catalytic core - and F(0) - the membrane proton channel. F(1) has five subunits: alpha(3), beta(3), gamma(1), delta(1), epsilon(1). F(0) has four main subunits: a(1), b(1), b'(1) and c(10-14). The alpha and beta chains form an alternating ring which encloses part of the gamma chain. F(1) is attached to F(0) by a central stalk formed by the gamma and epsilon chains, while a peripheral stalk is formed by the delta, b and b' chains.

Its subcellular location is the plastid. It localises to the chloroplast thylakoid membrane. In terms of biological role, f(1)F(0) ATP synthase produces ATP from ADP in the presence of a proton or sodium gradient. F-type ATPases consist of two structural domains, F(1) containing the extramembraneous catalytic core and F(0) containing the membrane proton channel, linked together by a central stalk and a peripheral stalk. During catalysis, ATP synthesis in the catalytic domain of F(1) is coupled via a rotary mechanism of the central stalk subunits to proton translocation. Functionally, component of the F(0) channel, it forms part of the peripheral stalk, linking F(1) to F(0). The polypeptide is ATP synthase subunit b, chloroplastic (Spinacia oleracea (Spinach)).